The chain runs to 218 residues: 7-cyano-7-deazaguanine synthase (218 aa).

9–19 (FSGGMDSFTVL) lines the ATP pocket. Zn(2+) is bound by residues cysteine 185, cysteine 193, cysteine 196, and cysteine 199.

It belongs to the QueC family. Requires Zn(2+) as cofactor.

The enzyme catalyses 7-carboxy-7-deazaguanine + NH4(+) + ATP = 7-cyano-7-deazaguanine + ADP + phosphate + H2O + H(+). Its pathway is purine metabolism; 7-cyano-7-deazaguanine biosynthesis. Its function is as follows. Catalyzes the ATP-dependent conversion of 7-carboxy-7-deazaguanine (CDG) to 7-cyano-7-deazaguanine (preQ(0)). In Pseudoalteromonas atlantica (strain T6c / ATCC BAA-1087), this protein is 7-cyano-7-deazaguanine synthase.